A 325-amino-acid polypeptide reads, in one-letter code: DNA-directed RNA polymerase subunit alpha (325 aa).

The segment at 1–231 is alpha N-terminal domain (alpha-NTD); it reads MQTSLLKPKI…DQLSVFAALE (231 aa). The alpha C-terminal domain (alpha-CTD) stretch occupies residues 246–325; the sequence is IDPILLRPVD…ENWPPAGLDK (80 aa).

Belongs to the RNA polymerase alpha chain family. In terms of assembly, homodimer. The RNAP catalytic core consists of 2 alpha, 1 beta, 1 beta' and 1 omega subunit. When a sigma factor is associated with the core the holoenzyme is formed, which can initiate transcription.

It catalyses the reaction RNA(n) + a ribonucleoside 5'-triphosphate = RNA(n+1) + diphosphate. Its function is as follows. DNA-dependent RNA polymerase catalyzes the transcription of DNA into RNA using the four ribonucleoside triphosphates as substrates. This is DNA-directed RNA polymerase subunit alpha from Paraburkholderia phymatum (strain DSM 17167 / CIP 108236 / LMG 21445 / STM815) (Burkholderia phymatum).